Reading from the N-terminus, the 440-residue chain is Thymidine phosphorylase (440 aa).

This sequence belongs to the thymidine/pyrimidine-nucleoside phosphorylase family. As to quaternary structure, homodimer.

The enzyme catalyses thymidine + phosphate = 2-deoxy-alpha-D-ribose 1-phosphate + thymine. It functions in the pathway pyrimidine metabolism; dTMP biosynthesis via salvage pathway; dTMP from thymine: step 1/2. Functionally, the enzymes which catalyze the reversible phosphorolysis of pyrimidine nucleosides are involved in the degradation of these compounds and in their utilization as carbon and energy sources, or in the rescue of pyrimidine bases for nucleotide synthesis. The sequence is that of Thymidine phosphorylase from Enterobacter sp. (strain 638).